The sequence spans 215 residues: Cytochrome b6 (215 aa).

The helical transmembrane segment at 32–52 threads the bilayer; it reads IFYCIGGITFTCFLVQVATGF. Cysteine 35 contacts heme c. Residues glycine 37, arginine 83, histidine 86, histidine 100, arginine 103, and arginine 114 each coordinate heme b. The chain crosses the membrane as a helical span at residues 90–110; that stretch reads ASMMVLMMVLHVFRVYLTGGF. 2 helical membrane-spanning segments follow: residues 116–136 and 186–206; these read LTWVTGVIMAVCTVSFGVTGY and LHTFVLPLLTAVFMLMHFLMI. Heme b is bound by residues histidine 187 and histidine 202. Heme c is bound by residues arginine 207 and isoleucine 211. Serine 212 is a heme b binding site.

The protein belongs to the cytochrome b family. PetB subfamily. The 4 large subunits of the cytochrome b6-f complex are cytochrome b6, subunit IV (17 kDa polypeptide, PetD), cytochrome f and the Rieske protein, while the 4 small subunits are PetG, PetL, PetM and PetN. The complex functions as a dimer. Heme b serves as cofactor. Heme c is required as a cofactor. Post-translationally, the N-terminus is blocked.

The protein resides in the plastid. The protein localises to the chloroplast thylakoid membrane. Functionally, component of the cytochrome b6-f complex, which mediates electron transfer between photosystem II (PSII) and photosystem I (PSI), cyclic electron flow around PSI, and state transitions. This chain is Cytochrome b6, found in Chlamydomonas reinhardtii (Chlamydomonas smithii).